We begin with the raw amino-acid sequence, 140 residues long: Large ribosomal subunit protein uL11 (140 aa).

The protein belongs to the universal ribosomal protein uL11 family. Part of the ribosomal stalk of the 50S ribosomal subunit. Interacts with L10 and the large rRNA to form the base of the stalk. L10 forms an elongated spine to which L12 dimers bind in a sequential fashion forming a multimeric L10(L12)X complex. One or more lysine residues are methylated.

Functionally, forms part of the ribosomal stalk which helps the ribosome interact with GTP-bound translation factors. In Thermoanaerobacter pseudethanolicus (strain ATCC 33223 / 39E) (Clostridium thermohydrosulfuricum), this protein is Large ribosomal subunit protein uL11.